The following is a 420-amino-acid chain: Methyltransferase/ribosomally synthesized cyclic peptide gymnopeptides precursor gymMA1 (420 aa).

Positions 1 to 251 (MQSSTQKQAG…GISTFYIPPK (251 aa)) are methyltransferase domain. Residues Arg-72, Tyr-76, and Tyr-98 contribute to the active site. S-adenosyl-L-methionine is bound by residues Tyr-98, His-100, Val-103, Ala-130, Gln-172, Ala-213, Ser-244, and Thr-245. The segment at 252-378 (ELKDPSMDIM…WALRCAMKKM (127 aa)) is clasp domain. The segment at 379–392 (PSSFMDEVDANNLP) is precursor leader. An N-methylvaline mark is found at Val-394 and Val-396. The residue at position 398 (Gly-398) is an N-methylglycine. At Val-399 the chain carries N-methylvaline. N-methylalanine is present on Ala-400. At Gly-402 the chain carries N-methylglycine. N-methylvaline occurs at positions 404, 406, 408, and 410.

The protein in the N-terminal section; belongs to the precorrin methyltransferase family. As to quaternary structure, homodimer. Post-translationally, gymMA1 automethylates at Val-394, Val-396, Gly-398, Val-399, Ala-400, Gly-402, Val-404, Val-406, Val-408 and Val-410 before being processed by a prolyloligopeptidase which likely forms a peptidyl ester upon removal of the follower propeptide, which then undergoes macrocyclization with the N-terminus of the modified core peptide. Peptide backbone alpha-N-methylations change the physicochemical properties of amide bonds to provide structural constraints and other favorable characteristics including biological membrane permeability to peptides.

It participates in mycotoxin biosynthesis. Fusion protein of the methyltransferase gymM1 and the gymnopeptides precursor; part of the gene cluster that mediates the biosynthesis of gymnopeptides, highly methylated cyclic octadecapeptides with striking antiproliferative activity on several human cancer cell lines. Gymnopeptides derive from the C-terminus of the gymMA1 protein, and it is the gymMA1 protein that methylates its own C-terminus using S-adenosyl methionine (SAM). The C-terminus is subsequently cleaved off and macrocyclized by a prolyloligopeptidase to give the final product. This chain is Methyltransferase/ribosomally synthesized cyclic peptide gymnopeptides precursor gymMA1, found in Gymnopus fusipes (Spindle toughshank).